The primary structure comprises 358 residues: Chorismate synthase (358 aa).

Arg46 provides a ligand contact to NADP(+). FMN-binding positions include 123-125, 235-236, Gly275, 290-294, and Arg316; these read RSS, NA, and KPTPS.

The protein belongs to the chorismate synthase family. Homotetramer. Requires FMNH2 as cofactor.

The catalysed reaction is 5-O-(1-carboxyvinyl)-3-phosphoshikimate = chorismate + phosphate. Its pathway is metabolic intermediate biosynthesis; chorismate biosynthesis; chorismate from D-erythrose 4-phosphate and phosphoenolpyruvate: step 7/7. In terms of biological role, catalyzes the anti-1,4-elimination of the C-3 phosphate and the C-6 proR hydrogen from 5-enolpyruvylshikimate-3-phosphate (EPSP) to yield chorismate, which is the branch point compound that serves as the starting substrate for the three terminal pathways of aromatic amino acid biosynthesis. This reaction introduces a second double bond into the aromatic ring system. This Helicobacter hepaticus (strain ATCC 51449 / 3B1) protein is Chorismate synthase.